The following is a 213-amino-acid chain: Adenylate kinase (213 aa).

Residue 10–15 participates in ATP binding; it reads GAGKGT. The interval 30–59 is NMP; sequence AVGDIFRTIIKTSTSEAELINNYVKQGALI. AMP is bound by residues arginine 36, 57 to 59, 85 to 88, and glutamine 92; these read ALI and GYPR. The segment at 123 to 161 is LID; the sequence is GRYSCKNCGKIYNVHFLQPKTDYVCDVCSSNVFDYRRDD. Arginine 124 serves as a coordination point for ATP. Cysteine 127 and cysteine 130 together coordinate Zn(2+). Position 133–134 (133–134) interacts with ATP; that stretch reads IY. Cysteine 147 and cysteine 150 together coordinate Zn(2+). Residues arginine 158 and arginine 169 each coordinate AMP. Lysine 197 serves as a coordination point for ATP.

It belongs to the adenylate kinase family. Monomer.

It localises to the cytoplasm. It catalyses the reaction AMP + ATP = 2 ADP. The protein operates within purine metabolism; AMP biosynthesis via salvage pathway; AMP from ADP: step 1/1. Functionally, catalyzes the reversible transfer of the terminal phosphate group between ATP and AMP. Plays an important role in cellular energy homeostasis and in adenine nucleotide metabolism. The polypeptide is Adenylate kinase (Rickettsia typhi (strain ATCC VR-144 / Wilmington)).